The following is a 243-amino-acid chain: Proteasome subunit beta (243 aa).

The interval 1-46 is disordered; the sequence is MFNPNNGSEFARNRARLDDTPNPYEPEVGSLPEGDRSQAGSDTVNK. The propeptide at 1 to 48 is removed in mature form; by autocatalysis; sequence MFNPNNGSEFARNRARLDDTPNPYEPEVGSLPEGDRSQAGSDTVNKTG. The active-site Nucleophile is the threonine 49.

This sequence belongs to the peptidase T1B family. As to quaternary structure, the 20S proteasome core is composed of 14 alpha and 14 beta subunits that assemble into four stacked heptameric rings, resulting in a barrel-shaped structure. The two inner rings, each composed of seven catalytic beta subunits, are sandwiched by two outer rings, each composed of seven alpha subunits. The catalytic chamber with the active sites is on the inside of the barrel. Has a gated structure, the ends of the cylinder being occluded by the N-termini of the alpha-subunits. Is capped at one or both ends by the proteasome regulatory ATPase, PAN.

The protein localises to the cytoplasm. The enzyme catalyses Cleavage of peptide bonds with very broad specificity.. The formation of the proteasomal ATPase PAN-20S proteasome complex, via the docking of the C-termini of PAN into the intersubunit pockets in the alpha-rings, triggers opening of the gate for substrate entry. Interconversion between the open-gate and close-gate conformations leads to a dynamic regulation of the 20S proteasome proteolysis activity. Functionally, component of the proteasome core, a large protease complex with broad specificity involved in protein degradation. The chain is Proteasome subunit beta from Halobacterium salinarum (strain ATCC 29341 / DSM 671 / R1).